The sequence spans 260 residues: Small ribosomal subunit protein uS2 (260 aa).

Belongs to the universal ribosomal protein uS2 family.

This Borreliella burgdorferi (strain ATCC 35210 / DSM 4680 / CIP 102532 / B31) (Borrelia burgdorferi) protein is Small ribosomal subunit protein uS2 (rpsB).